Reading from the N-terminus, the 223-residue chain is Ribonuclease S-2 (223 aa).

A signal peptide spans 1–22 (MAKSQLVSALFVFFFSLSPIYG). C38 and C44 are joined by a disulfide. N-linked (GlcNAc...) asparagine glycosylation occurs at N51. The active-site Proton donor is H55. RNA-binding positions include H55 and 94-95 (QL). Disulfide bonds link C71–C119, C178–C211, and C194–C205. Q112 is a catalytic residue. 115 to 116 (KH) provides a ligand contact to RNA. H116 (proton acceptor) is an active-site residue.

Belongs to the RNase T2 family. In terms of tissue distribution, pistil.

Its subcellular location is the secreted. The protein resides in the extracellular space. It catalyses the reaction a ribonucleotidyl-ribonucleotide-RNA + H2O = a 3'-end 3'-phospho-ribonucleotide-RNA + a 5'-end dephospho-ribonucleoside-RNA + H(+). Self-incompatibility (SI) is the inherited ability of a flowering plant to prevent self-fertilization by discriminating between self and non-self pollen during pollination. In many species of the Solanaceae, self-incompatibility is controlled by the single, multiallelic locus S. This stylar glycoprotein is associated with expression of self-incompatibility in potato. This chain is Ribonuclease S-2, found in Solanum tuberosum (Potato).